The sequence spans 896 residues: Protein argonaute 9 (896 aa).

A PAZ domain is found at 267–380; it reads PVVDFLLANQ…FPIEFCNLVS (114 aa). The Piwi domain maps to 550 to 857; it reads FLLCILAERK…AAAQMGTVMK (308 aa).

It belongs to the argonaute family. Ago subfamily. As to expression, expressed in embryonic shoot apex region, pollen and developing ovules.

In terms of biological role, involved in RNA-mediated post-transcriptional gene silencing (PTGS). Main component of the RNA-induced silencing complex (RISC) that binds to a short guide RNA such as a microRNA (miRNA) or small interfering RNA (siRNA). RISC uses the mature miRNA or siRNA as a guide for slicer-directed cleavage of homologous mRNAs to repress gene expression. Associates preferentially with small RNAs of 24 nucleotide in length with a 5' terminal adenosine. Interacts with 24 nucleotide sRNAs derived from transposable elements (TEs). Required to silence pericentrometric-located TEs in female gametes and their accessory cells. Necessary to inactivate a significant proportion of long terminal repeat retrotransposons (LTRs) in the ovule. Required to specify cell fate in ovule. Involved in the control of female gamete formation by restricting the specification of gametophyte precursors in a dosage-dependent, non-cell-autonomous manner. Targeted by turnip yellows virus (TuYV) protein P0 (via F-box-like domain) for probable proteasome degradation and thereby inactivating AGO9 function in RNA silencing. This is Protein argonaute 9 (AGO9) from Arabidopsis thaliana (Mouse-ear cress).